We begin with the raw amino-acid sequence, 307 residues long: B3 domain-containing protein At5g18000 (307 aa).

The TF-B3 1 DNA-binding region spans 20 to 115 (FFKILRREDH…CFNVTIFEAD (96 aa)). Disordered regions lie at residues 122–141 (PRKTITSSSGRNKREERKSI) and 151–209 (IESW…SEAG). The span at 166-177 (ESTSGRLTQKQE) shows a compositional bias: polar residues. Residues 178–192 (LNLRKKEADKTEKSK) show a composition bias toward basic and acidic residues. Positions 214-307 (IPEFKLTIKK…TEMRVKVSKE (94 aa)) form a DNA-binding region, TF-B3 2.

The protein resides in the nucleus. The protein is B3 domain-containing protein At5g18000 of Arabidopsis thaliana (Mouse-ear cress).